The primary structure comprises 217 residues: 3,4-dihydroxy-2-butanone 4-phosphate synthase (217 aa).

D-ribulose 5-phosphate is bound by residues 37 to 38 (RE), aspartate 42, 150 to 154 (RRGHT), and glutamate 174. Residue glutamate 38 coordinates Mg(2+). Residue histidine 153 participates in Mg(2+) binding.

This sequence belongs to the DHBP synthase family. In terms of assembly, homodimer. The cofactor is Mg(2+). Mn(2+) serves as cofactor.

It catalyses the reaction D-ribulose 5-phosphate = (2S)-2-hydroxy-3-oxobutyl phosphate + formate + H(+). It functions in the pathway cofactor biosynthesis; riboflavin biosynthesis; 2-hydroxy-3-oxobutyl phosphate from D-ribulose 5-phosphate: step 1/1. In terms of biological role, catalyzes the conversion of D-ribulose 5-phosphate to formate and 3,4-dihydroxy-2-butanone 4-phosphate. The chain is 3,4-dihydroxy-2-butanone 4-phosphate synthase from Pseudoalteromonas translucida (strain TAC 125).